A 599-amino-acid polypeptide reads, in one-letter code: Aspartate--tRNA(Asp/Asn) ligase (599 aa).

Glu180 lines the L-aspartate pocket. The interval 204–207 (QLLK) is aspartate. Arg226 contacts L-aspartate. ATP-binding positions include 226–228 (RDE) and Gln235. Position 457 (His457) interacts with L-aspartate. Glu491 contributes to the ATP binding site. Arg498 is a binding site for L-aspartate. 543–546 (GWDR) is an ATP binding site. Positions 565 to 599 (KAGGGRDPLTGAPAPISDEQRAETGVDYDPDADEN) are disordered. The span at 590–599 (VDYDPDADEN) shows a compositional bias: acidic residues.

Belongs to the class-II aminoacyl-tRNA synthetase family. Type 1 subfamily. In terms of assembly, homodimer.

It is found in the cytoplasm. It carries out the reaction tRNA(Asx) + L-aspartate + ATP = L-aspartyl-tRNA(Asx) + AMP + diphosphate. Its function is as follows. Aspartyl-tRNA synthetase with relaxed tRNA specificity since it is able to aspartylate not only its cognate tRNA(Asp) but also tRNA(Asn). Reaction proceeds in two steps: L-aspartate is first activated by ATP to form Asp-AMP and then transferred to the acceptor end of tRNA(Asp/Asn). This is Aspartate--tRNA(Asp/Asn) ligase from Bifidobacterium longum (strain DJO10A).